Here is a 279-residue protein sequence, read N- to C-terminus: Phosphatidylglycerol--prolipoprotein diacylglyceryl transferase (279 aa).

3 consecutive transmembrane segments (helical) span residues 22–42 (WYGIIIACGILLGYFIAQAAL), 52–72 (LIDIIFYSAIVGFIVARIYFV), and 89–109 (IWHGGIAIHGGLIGGLISGII). Arg137 serves as a coordination point for a 1,2-diacyl-sn-glycero-3-phospho-(1'-sn-glycerol). 2 consecutive transmembrane segments (helical) span residues 203-223 (LGETFFGYLIWYSVGRFFVEA) and 235-255 (IRVAQLVSVVLIMISVIFVIY).

This sequence belongs to the Lgt family.

The protein localises to the cell membrane. It carries out the reaction L-cysteinyl-[prolipoprotein] + a 1,2-diacyl-sn-glycero-3-phospho-(1'-sn-glycerol) = an S-1,2-diacyl-sn-glyceryl-L-cysteinyl-[prolipoprotein] + sn-glycerol 1-phosphate + H(+). It functions in the pathway protein modification; lipoprotein biosynthesis (diacylglyceryl transfer). Functionally, catalyzes the transfer of the diacylglyceryl group from phosphatidylglycerol to the sulfhydryl group of the N-terminal cysteine of a prolipoprotein, the first step in the formation of mature lipoproteins. This Staphylococcus epidermidis (strain ATCC 35984 / DSM 28319 / BCRC 17069 / CCUG 31568 / BM 3577 / RP62A) protein is Phosphatidylglycerol--prolipoprotein diacylglyceryl transferase.